A 956-amino-acid chain; its full sequence is Golgin candidate 5 (956 aa).

Disordered regions lie at residues 70 to 230 (MSFM…QHKI) and 278 to 298 (IFES…SSDE). Composition is skewed to basic and acidic residues over residues 77–89 (SDEK…DSVR) and 118–129 (ANKETNVRREAD). 2 stretches are compositionally biased toward polar residues: residues 160-177 (EYSL…SLQP) and 184-193 (TASQDSQPEQ). The segment covering 206-219 (SEAKEVTVENKDTV) has biased composition (basic and acidic residues). Positions 333-765 (SDSADVILEL…LIQKDLEREK (433 aa)) form a coiled coil. Phosphoserine is present on Ser793. Residues 851 to 951 (SAYEATLRQK…EMYREQVNML (101 aa)) adopt a coiled-coil conformation.

In terms of assembly, interacts with RABH1B and RABH1C, but not with RABD1 or RABD2A.

Its subcellular location is the golgi apparatus. It localises to the cytoplasm. In terms of biological role, golgi matrix protein playing a role in tethering of vesicles to Golgi membranes and in maintaining the overall structure of the Golgi apparatus. The sequence is that of Golgin candidate 5 (GC5) from Arabidopsis thaliana (Mouse-ear cress).